A 152-amino-acid polypeptide reads, in one-letter code: Xanthine-guanine phosphoribosyltransferase (152 aa).

5-phospho-alpha-D-ribose 1-diphosphate contacts are provided by residues 37–38 (RG), R69, and 88–96 (DDLVDTGGT). R69 lines the GMP pocket. D89 is a Mg(2+) binding site. Guanine is bound by residues D92 and I135. D92 and I135 together coordinate xanthine. Residues 92–96 (DTGGT) and 134–135 (WI) contribute to the GMP site.

This sequence belongs to the purine/pyrimidine phosphoribosyltransferase family. XGPT subfamily. As to quaternary structure, homotetramer. Mg(2+) is required as a cofactor.

The protein localises to the cell inner membrane. It catalyses the reaction GMP + diphosphate = guanine + 5-phospho-alpha-D-ribose 1-diphosphate. The catalysed reaction is XMP + diphosphate = xanthine + 5-phospho-alpha-D-ribose 1-diphosphate. The enzyme catalyses IMP + diphosphate = hypoxanthine + 5-phospho-alpha-D-ribose 1-diphosphate. It functions in the pathway purine metabolism; GMP biosynthesis via salvage pathway; GMP from guanine: step 1/1. It participates in purine metabolism; XMP biosynthesis via salvage pathway; XMP from xanthine: step 1/1. Its function is as follows. Purine salvage pathway enzyme that catalyzes the transfer of the ribosyl-5-phosphate group from 5-phospho-alpha-D-ribose 1-diphosphate (PRPP) to the N9 position of the 6-oxopurines guanine and xanthine to form the corresponding ribonucleotides GMP (guanosine 5'-monophosphate) and XMP (xanthosine 5'-monophosphate), with the release of PPi. To a lesser extent, also acts on hypoxanthine. The sequence is that of Xanthine-guanine phosphoribosyltransferase from Edwardsiella ictaluri (strain 93-146).